Consider the following 415-residue polypeptide: Serine hydroxymethyltransferase (415 aa).

Residues Leu-117 and 121-123 (GHL) contribute to the (6S)-5,6,7,8-tetrahydrofolate site. Lys-226 is modified (N6-(pyridoxal phosphate)lysine). A (6S)-5,6,7,8-tetrahydrofolate-binding site is contributed by 349–351 (SPF).

The protein belongs to the SHMT family. In terms of assembly, homodimer. The cofactor is pyridoxal 5'-phosphate.

The protein localises to the cytoplasm. It carries out the reaction (6R)-5,10-methylene-5,6,7,8-tetrahydrofolate + glycine + H2O = (6S)-5,6,7,8-tetrahydrofolate + L-serine. It participates in one-carbon metabolism; tetrahydrofolate interconversion. Its pathway is amino-acid biosynthesis; glycine biosynthesis; glycine from L-serine: step 1/1. Catalyzes the reversible interconversion of serine and glycine with tetrahydrofolate (THF) serving as the one-carbon carrier. This reaction serves as the major source of one-carbon groups required for the biosynthesis of purines, thymidylate, methionine, and other important biomolecules. Also exhibits THF-independent aldolase activity toward beta-hydroxyamino acids, producing glycine and aldehydes, via a retro-aldol mechanism. This is Serine hydroxymethyltransferase from Geobacter sp. (strain M21).